Reading from the N-terminus, the 245-residue chain is Complement C1q subcomponent subunit A (245 aa).

A signal peptide spans 1 to 22 (MEGPRGWLVLCVLAISLASMVT). Basic and acidic residues predominate over residues 27–38 (RAPDGKKGEAGR). Residues 27-114 (RAPDGKKGEA…SPGNIKDQPR (88 aa)) are disordered. Residues 31–109 (GKKGEAGRPG…KGTKGSPGNI (79 aa)) form the Collagen-like domain. Lys-33 carries the post-translational modification 5-hydroxylysine. O-linked (Gal...) hydroxylysine glycosylation occurs at Lys-33. A 4-hydroxyproline mark is found at Pro-39 and Pro-45. A 5-hydroxylysine modification is found at Lys-48. O-linked (Gal...) hydroxylysine glycosylation is present at Lys-48. 4-hydroxyproline is present on residues Pro-54 and Pro-57. Lys-67 is subject to 5-hydroxylysine. An O-linked (Gal...) hydroxylysine glycan is attached at Lys-67. 4-hydroxyproline is present on residues Pro-73, Pro-79, and Pro-85. Lys-100 is subject to 5-hydroxylysine. O-linked (Gal...) hydroxylysine glycosylation occurs at Lys-100. The 136-residue stretch at 110–245 (KDQPRPAFSA…FSGFLIFPSA (136 aa)) folds into the C1q domain. The N-linked (GlcNAc...) asparagine glycan is linked to Asn-146. A disulfide bridge links Cys-172 with Cys-190. Gln-199 contributes to the Ca(2+) binding site.

As to quaternary structure, core component of the complement C1 complex, a calcium-dependent complex composed of 1 molecule of the C1Q subcomplex, 2 molecules of C1R and 2 molecules of C1S. The C1Q subcomplex is composed 18 subunits: 3 chains of C1QA, C1QB, and C1QC trimerize to form 6 collagen-like triple helices connected to six globular ligand-recognition modules (C1q domain). Interacts with CR1 (via Sushi 24 and Sushi 25 domains). Interacts (via C-terminus) with CD33; this interaction activates CD33 inhibitory motifs. In terms of assembly, (Microbial infection) Interacts with Staphylococcus aureus protein Cna; this interaction results in the inhibition of the classical complement pathway. Post-translationally, O-linked glycans are assumed to be the Glc-Gal disaccharides typically found as secondary modifications of hydroxylated lysines in collagen-like domains.

It localises to the secreted. Its subcellular location is the cell surface. Its activity is regulated as follows. The C1Q subcomplex is inhibited by sulfated molecules, such as triterpenoid sulfates, heparan sulfate, or chondroitin sulfates. Its function is as follows. Core component of the complement C1 complex, a multiprotein complex that initiates the classical pathway of the complement system, a cascade of proteins that leads to phagocytosis and breakdown of pathogens and signaling that strengthens the adaptive immune system. The classical complement pathway is initiated by the C1Q subcomplex of the C1 complex, which specifically binds IgG or IgM immunoglobulins complexed with antigens, forming antigen-antibody complexes on the surface of pathogens: C1QA, together with C1QB and C1QC, specifically recognizes and binds the Fc regions of IgG or IgM via its C1q domain. Immunoglobulin-binding activates the proenzyme C1R, which cleaves C1S, initiating the proteolytic cascade of the complement system. The C1Q subcomplex is activated by a hexamer of IgG complexed with antigens, while it is activated by a pentameric IgM. The C1Q subcomplex also recognizes and binds phosphatidylserine exposed on the surface of cells undergoing programmed cell death, possibly promoting activation of the complement system. This chain is Complement C1q subcomponent subunit A, found in Homo sapiens (Human).